The primary structure comprises 181 residues: Peptidyl-tRNA hydrolase (181 aa).

Y14 provides a ligand contact to tRNA. Residue H19 is the Proton acceptor of the active site. Positions 60, 62, and 106 each coordinate tRNA.

Belongs to the PTH family. Monomer.

Its subcellular location is the cytoplasm. The catalysed reaction is an N-acyl-L-alpha-aminoacyl-tRNA + H2O = an N-acyl-L-amino acid + a tRNA + H(+). Hydrolyzes ribosome-free peptidyl-tRNAs (with 1 or more amino acids incorporated), which drop off the ribosome during protein synthesis, or as a result of ribosome stalling. In terms of biological role, catalyzes the release of premature peptidyl moieties from peptidyl-tRNA molecules trapped in stalled 50S ribosomal subunits, and thus maintains levels of free tRNAs and 50S ribosomes. The chain is Peptidyl-tRNA hydrolase from Campylobacter curvus (strain 525.92).